The sequence spans 106 residues: Nucleoid-associated protein Noc_2594 (106 aa).

2 disordered regions span residues 1–20 (MKGGLGNLMKQAQQLQSNME) and 85–106 (QSKEKMSSMTSGMLPPGFKLPL). Residues 10 to 20 (KQAQQLQSNME) show a composition bias toward polar residues.

This sequence belongs to the YbaB/EbfC family. In terms of assembly, homodimer.

The protein resides in the cytoplasm. The protein localises to the nucleoid. Its function is as follows. Binds to DNA and alters its conformation. May be involved in regulation of gene expression, nucleoid organization and DNA protection. The sequence is that of Nucleoid-associated protein Noc_2594 from Nitrosococcus oceani (strain ATCC 19707 / BCRC 17464 / JCM 30415 / NCIMB 11848 / C-107).